We begin with the raw amino-acid sequence, 625 residues long: Interferon-induced GTP-binding protein Mx2 (625 aa).

In terms of domain architecture, Dynamin-type G spans 29–302; the sequence is DLALPAIAVI…LVFHIGRCLP (274 aa). Residues 39–46 form a G1 motif region; sequence GDQSSGKS. Position 39-46 (39-46) interacts with GTP; it reads GDQSSGKS. Residues 64–66 are G2 motif; that stretch reads VTR. The interval 140–143 is G3 motif; it reads DLPG. Residues 140 to 144 and 209 to 212 contribute to the GTP site; these read DLPGI and TKPD. Residues 209–212 are G4 motif; the sequence is TKPD. The segment at 241-244 is G5 motif; the sequence is RCRG. Positions 539–625 constitute a GED domain; the sequence is REELTCHLKS…TEALKYLAKF (87 aa).

It belongs to the TRAFAC class dynamin-like GTPase superfamily. Dynamin/Fzo/YdjA family.

It is found in the cytoplasm. This chain is Interferon-induced GTP-binding protein Mx2 (mx2), found in Ictalurus punctatus (Channel catfish).